The following is an 81-amino-acid chain: Sulfur carrier protein TusA (81 aa).

Cysteine 19 acts as the Cysteine persulfide intermediate in catalysis.

Belongs to the sulfur carrier protein TusA family.

The protein resides in the cytoplasm. Its function is as follows. Sulfur carrier protein which probably makes part of a sulfur-relay system. The polypeptide is Sulfur carrier protein TusA (Shewanella piezotolerans (strain WP3 / JCM 13877)).